The sequence spans 208 residues: Methyl-CpG-binding domain protein 3-like 5 (208 aa).

Belongs to the MBD3L family.

The chain is Methyl-CpG-binding domain protein 3-like 5 (MBD3L5) from Homo sapiens (Human).